A 539-amino-acid chain; its full sequence is CTP synthase (539 aa).

Residues 1–272 (MTLRSKMTKY…AQIILSHFKI (272 aa)) form an amidoligase domain region. S19 contributes to the CTP binding site. Residue S19 participates in UTP binding. An ATP-binding site is contributed by 20–25 (GLGKGV). L-glutamine is bound at residue Y60. Residue D77 participates in ATP binding. Mg(2+)-binding residues include D77 and E147. Residues 154-156 (DIE), 193-198 (KSKPTQ), and K229 contribute to the CTP site. Residues 193-198 (KSKPTQ) and K229 contribute to the UTP site. In terms of domain architecture, Glutamine amidotransferase type-1 spans 298 to 539 (KILMVGKYVE…SFLRVLIKNN (242 aa)). G360 contributes to the L-glutamine binding site. The Nucleophile; for glutamine hydrolysis role is filled by C387. L-glutamine is bound by residues 388-391 (LGFQ), E410, and R469. Catalysis depends on residues H514 and E516.

It belongs to the CTP synthase family. Homotetramer.

The enzyme catalyses UTP + L-glutamine + ATP + H2O = CTP + L-glutamate + ADP + phosphate + 2 H(+). It catalyses the reaction L-glutamine + H2O = L-glutamate + NH4(+). The catalysed reaction is UTP + NH4(+) + ATP = CTP + ADP + phosphate + 2 H(+). It participates in pyrimidine metabolism; CTP biosynthesis via de novo pathway; CTP from UDP: step 2/2. Its activity is regulated as follows. Allosterically activated by GTP, when glutamine is the substrate; GTP has no effect on the reaction when ammonia is the substrate. The allosteric effector GTP functions by stabilizing the protein conformation that binds the tetrahedral intermediate(s) formed during glutamine hydrolysis. Inhibited by the product CTP, via allosteric rather than competitive inhibition. In terms of biological role, catalyzes the ATP-dependent amination of UTP to CTP with either L-glutamine or ammonia as the source of nitrogen. Regulates intracellular CTP levels through interactions with the four ribonucleotide triphosphates. The protein is CTP synthase of Mycoplasmopsis pulmonis (strain UAB CTIP) (Mycoplasma pulmonis).